Consider the following 602-residue polypeptide: Protein NRT1/ PTR FAMILY 5.7 (602 aa).

2 consecutive transmembrane segments (helical) span residues 56–73 (LSYFGISTNLVVYLTTIL) and 87–107 (WSGVTTLMPLLGGFVADAYLG). Thr-111 is subject to Phosphothreonine. Transmembrane regions (helical) follow at residues 112 to 132 (VLLATTIYLMGLILLTLSWFI), 152 to 172 (IAFFIAIYLISIGTGGHKPSL), 197 to 217 (WWNAGLCAGILTAVTVIVYIE), 220 to 240 (IGWGVASIILTIVMATSFFIF), 337 to 357 (VKLLINMIPIWFFTLAFGVCA), 381 to 401 (IVPPASLFSLIALSIIITVTI), 422 to 442 (ILQRIGVGMVFSLFAMIIAAL), 465 to 485 (IWLAPQFLVLGVADAFTLVGL), 500 to 520 (LGIAFYLSVLGAASFVNNLLI), and 548 to 568 (FYWMLAALTAANICCFVIVAM).

The protein belongs to the major facilitator superfamily. Proton-dependent oligopeptide transporter (POT/PTR) (TC 2.A.17) family. In terms of tissue distribution, expressed in shoots, stems, leaves and flowers.

The protein resides in the membrane. This Arabidopsis thaliana (Mouse-ear cress) protein is Protein NRT1/ PTR FAMILY 5.7 (NPF5.7).